Here is a 584-residue protein sequence, read N- to C-terminus: DNA ligase (584 aa).

Glu-249 contacts ATP. The N6-AMP-lysine intermediate role is filled by Lys-251. Arg-256, Arg-271, Glu-301, Phe-341, Arg-416, and Lys-422 together coordinate ATP.

This sequence belongs to the ATP-dependent DNA ligase family. Requires Mg(2+) as cofactor.

It carries out the reaction ATP + (deoxyribonucleotide)n-3'-hydroxyl + 5'-phospho-(deoxyribonucleotide)m = (deoxyribonucleotide)n+m + AMP + diphosphate.. Its function is as follows. DNA ligase that seals nicks in double-stranded DNA during DNA replication, DNA recombination and DNA repair. The chain is DNA ligase from Pyrobaculum neutrophilum (strain DSM 2338 / JCM 9278 / NBRC 100436 / V24Sta) (Thermoproteus neutrophilus).